Consider the following 332-residue polypeptide: Methionine synthase (332 aa).

Zn(2+)-binding residues include His211, Cys213, and Cys296.

This sequence belongs to the archaeal MetE family. The cofactor is Zn(2+).

It participates in amino-acid biosynthesis; L-methionine biosynthesis via de novo pathway. Functionally, catalyzes the transfer of a methyl group to L-homocysteine resulting in methionine formation. The physiological methyl donor is unknown. The protein is Methionine synthase of Saccharolobus islandicus (strain Y.N.15.51 / Yellowstone #2) (Sulfolobus islandicus).